Consider the following 172-residue polypeptide: MDRAEKREFVAWLNGAFKESGSVVVAHYTGLTVAQMSDLRSKMRDAGGAVKVAKNRLAKIALQGTESEGIADLFTGQTVVAYANDPITAPKVAVEFAKANDKLVILGGAMGATTLNADGVKSLASLPSLDELRAKLVGMIQTPAQRLAVLTSAPAGQIARVIGAHARKNEAA.

This sequence belongs to the universal ribosomal protein uL10 family. As to quaternary structure, part of the ribosomal stalk of the 50S ribosomal subunit. The N-terminus interacts with L11 and the large rRNA to form the base of the stalk. The C-terminus forms an elongated spine to which L12 dimers bind in a sequential fashion forming a multimeric L10(L12)X complex.

Its function is as follows. Forms part of the ribosomal stalk, playing a central role in the interaction of the ribosome with GTP-bound translation factors. The chain is Large ribosomal subunit protein uL10 from Brucella suis (strain ATCC 23445 / NCTC 10510).